A 154-amino-acid polypeptide reads, in one-letter code: Interleukin-7 (154 aa).

The signal sequence occupies residues methionine 1–serine 25. Disulfide bonds link cysteine 27–cysteine 145, cysteine 58–cysteine 133, and cysteine 71–cysteine 116. Residues asparagine 94 and asparagine 115 are each glycosylated (N-linked (GlcNAc...) asparagine).

It belongs to the IL-7/IL-9 family. As to quaternary structure, interacts with IL7R and CSF2RG. In terms of processing, three disulfide bonds are present.

Its subcellular location is the secreted. In terms of biological role, hematopoietic cytokine that plays an essential role in the development, expansion, and survival of naive and memory T-cells and B-cells thereby regulating the number of mature lymphocytes and maintaining lymphoid homeostasis. Mechanistically, exerts its biological effects through a receptor composed of IL7RA subunit and the cytokine receptor common subunit gamma/CSF2RG. Binding to the receptor leads to activation of various kinases including JAK1 or JAK3 depending on the cell type and subsequently propagation of signals through activation of several downstream signaling pathways including the PI3K/Akt/mTOR or the JAK-STAT5. The sequence is that of Interleukin-7 (Il7) from Mus musculus (Mouse).